The chain runs to 280 residues: Ribosomal RNA small subunit methyltransferase A (280 aa).

Histidine 13, leucine 15, glycine 40, glutamate 61, aspartate 85, and asparagine 105 together coordinate S-adenosyl-L-methionine.

The protein belongs to the class I-like SAM-binding methyltransferase superfamily. rRNA adenine N(6)-methyltransferase family. RsmA subfamily.

The protein localises to the cytoplasm. The catalysed reaction is adenosine(1518)/adenosine(1519) in 16S rRNA + 4 S-adenosyl-L-methionine = N(6)-dimethyladenosine(1518)/N(6)-dimethyladenosine(1519) in 16S rRNA + 4 S-adenosyl-L-homocysteine + 4 H(+). Functionally, specifically dimethylates two adjacent adenosines (A1518 and A1519) in the loop of a conserved hairpin near the 3'-end of 16S rRNA in the 30S particle. May play a critical role in biogenesis of 30S subunits. The polypeptide is Ribosomal RNA small subunit methyltransferase A (Phocaeicola vulgatus (strain ATCC 8482 / DSM 1447 / JCM 5826 / CCUG 4940 / NBRC 14291 / NCTC 11154) (Bacteroides vulgatus)).